Reading from the N-terminus, the 317-residue chain is Putative S-adenosyl-L-methionine-dependent methyltransferase MSMEG_0093 (317 aa).

Residues D134 and 163–164 (DL) each bind S-adenosyl-L-methionine.

It belongs to the UPF0677 family.

Exhibits S-adenosyl-L-methionine-dependent methyltransferase activity. The polypeptide is Putative S-adenosyl-L-methionine-dependent methyltransferase MSMEG_0093 (Mycolicibacterium smegmatis (strain ATCC 700084 / mc(2)155) (Mycobacterium smegmatis)).